The following is a 152-amino-acid chain: DNA-binding transcriptional activator DecR (152 aa).

The HTH asnC-type domain occupies 2 to 63; it reads LDKIDRKLLA…LLDPEKIGLG (62 aa). The H-T-H motif DNA-binding region spans 21-40; the sequence is LQALAEAVNLTTTPCWKRLK.

Plays a role in L-cysteine detoxification. Binds to the dlsT(yhaO)-yhaM operon promoter in the presence but not absence of L-cysteine; activates transcription from the dlsT(yhaO)-yhaM operon. The chain is DNA-binding transcriptional activator DecR (decR) from Escherichia coli O157:H7.